The sequence spans 133 residues: Large ribosomal subunit protein uL15 (133 aa).

Positions 1–64 (MGLENLKPAK…QPLQRRLPKI (64 aa)) are disordered.

It belongs to the universal ribosomal protein uL15 family. In terms of assembly, part of the 50S ribosomal subunit.

Its function is as follows. Binds to the 23S rRNA. The protein is Large ribosomal subunit protein uL15 of Helicobacter pylori (strain G27).